We begin with the raw amino-acid sequence, 168 residues long: Disulfide bond formation protein B 2 (168 aa).

Residues 1–14 (MSAPIGATRAERWT) are Cytoplasmic-facing. Residues 15 to 31 (LLAIGVASFELVAGALW) form a helical membrane-spanning segment. The Periplasmic portion of the chain corresponds to 32–49 (IQLAWQEDPCPLCIIQRY). A disulfide bridge connects residues cysteine 41 and cysteine 44. Residues 50–64 (LFLLIALFTFVAAAG) traverse the membrane as a helical segment. At 65–69 (GRRVA) the chain is on the cytoplasmic side. A helical membrane pass occupies residues 70 to 87 (LLRVLSLTTALAGAAVAV). Topologically, residues 88 to 142 (RHIYVQAHPGFSCGFDALQPVIDSLPPAHWLPPVFKVGGLCETLYPPILGLSLPM) are periplasmic. An intrachain disulfide couples cysteine 100 to cysteine 128. The helical transmembrane segment at 143–161 (WALVGFSAIAVALGWRIRA) threads the bilayer. The Cytoplasmic segment spans residues 162–168 (QAVIRTA).

Belongs to the DsbB family.

It localises to the cell inner membrane. Functionally, required for disulfide bond formation in some periplasmic proteins. Acts by oxidizing the DsbA protein. This chain is Disulfide bond formation protein B 2, found in Burkholderia lata (strain ATCC 17760 / DSM 23089 / LMG 22485 / NCIMB 9086 / R18194 / 383).